Here is a 453-residue protein sequence, read N- to C-terminus: Aldehyde dehydrogenase, dimeric NADP-preferring (453 aa).

Residue Ser2 is modified to N-acetylserine. Residue Lys178 is modified to N6-acetyllysine. Residue 188–193 (GNTAVG) participates in NAD(+) binding. The residue at position 194 (Lys194) is an N6-acetyllysine. Active-site residues include Glu210 and Cys244.

It belongs to the aldehyde dehydrogenase family. In terms of assembly, homodimer.

It localises to the cytoplasm. It carries out the reaction an aldehyde + NAD(+) + H2O = a carboxylate + NADH + 2 H(+). The enzyme catalyses octanal + NAD(+) + H2O = octanoate + NADH + 2 H(+). In terms of biological role, ALDHs play a major role in the detoxification of alcohol-derived acetaldehyde. They are involved in the metabolism of corticosteroids, biogenic amines, neurotransmitters, and lipid peroxidation. Oxidizes medium and long chain aldehydes into non-toxic fatty acids. Preferentially oxidizes aromatic aldehyde substrates. Comprises about 50 percent of corneal epithelial soluble proteins. May play a role in preventing corneal damage caused by ultraviolet light. The polypeptide is Aldehyde dehydrogenase, dimeric NADP-preferring (ALDH3A1) (Canis lupus familiaris (Dog)).